Here is a 492-residue protein sequence, read N- to C-terminus: 3-octaprenyl-4-hydroxybenzoate carboxy-lyase (492 aa).

Asparagine 175 serves as a coordination point for Mn(2+). Prenylated FMN-binding positions include 178–180 (IYR), 192–194 (RWL), and 197–198 (RG). Position 241 (glutamate 241) interacts with Mn(2+). Residue aspartate 290 is the Proton donor of the active site.

Belongs to the UbiD family. As to quaternary structure, homohexamer. Requires prenylated FMN as cofactor. Mn(2+) is required as a cofactor.

It is found in the cell membrane. It carries out the reaction a 4-hydroxy-3-(all-trans-polyprenyl)benzoate + H(+) = a 2-(all-trans-polyprenyl)phenol + CO2. It participates in cofactor biosynthesis; ubiquinone biosynthesis. Its function is as follows. Catalyzes the decarboxylation of 3-octaprenyl-4-hydroxy benzoate to 2-octaprenylphenol, an intermediate step in ubiquinone biosynthesis. The chain is 3-octaprenyl-4-hydroxybenzoate carboxy-lyase from Salmonella choleraesuis (strain SC-B67).